Here is a 464-residue protein sequence, read N- to C-terminus: ESX-1 secretion system protein EccE1 (464 aa).

Helical transmembrane passes span F11–M31 and D34–I54.

It belongs to the EccE family. As to quaternary structure, part of the ESX-1 / type VII secretion system (T7SS), which is composed of cytosolic and membrane components. The ESX-1 membrane complex is composed of EccB1, EccCa1, EccCb1, EccD1 and EccE1.

It is found in the cell inner membrane. Its function is as follows. Part of the ESX-1 / type VII specialized secretion system (T7SS), which exports several proteins including EsxA and EsxB. Plays a role in DNA conjugation, in at least a donor strain. The sequence is that of ESX-1 secretion system protein EccE1 from Mycolicibacterium smegmatis (strain ATCC 700084 / mc(2)155) (Mycobacterium smegmatis).